The chain runs to 477 residues: Tripartite motif-containing protein 72 (477 aa).

Residues Leu-14, Gln-17, Pro-29, Cys-31, Thr-34, Gln-37, Thr-53, Pro-56, Gly-86, Leu-89, Val-97, Glu-100, Leu-105, Gly-108, Gly-114, and Lys-117 each contribute to the Zn(2+) site. The RING-type zinc finger occupies 16–59 (CQLCLELFRAPVTPECGHTFCQGCLTGVPKNQDQNGSTPCPTCQ). The B box-type zinc finger occupies 83–124 (VPQGHCLEHMDPLSVYCEQDKELICGVCASLGKHKGHNIITA). Positions 135 to 232 (LPQQQVILQE…QMEGVLKDVE (98 aa)) form a coiled coil. One can recognise a B30.2/SPRY domain in the interval 272–476 (DEFKFQVWRK…LKIFYPPAEQ (205 aa)).

It belongs to the TRIM/RBCC family. As to quaternary structure, homodimer. Homooligomer; disulfide-linked. Oligomerizes on the phospholipid membrane. In terms of processing, disulfide bond formation at Cys-244 occurs in case of membrane damage that cause the entry of the oxidized milieu of the extracellular space, resulting in homooligomerization.

The protein localises to the cell membrane. It is found in the sarcolemma. It localises to the cytoplasmic vesicle membrane. The catalysed reaction is S-ubiquitinyl-[E2 ubiquitin-conjugating enzyme]-L-cysteine + [acceptor protein]-L-lysine = [E2 ubiquitin-conjugating enzyme]-L-cysteine + N(6)-ubiquitinyl-[acceptor protein]-L-lysine.. The protein operates within protein modification; protein ubiquitination. With respect to regulation, specifically binds phosphatidylserine. The binding to phospholipids enhances ubiquitination activity. In terms of biological role, muscle-specific E3 ubiquitin-protein ligase that plays a central role in cell membrane repair by nucleating the assembly of the repair machinery at injury sites. Acts as a sensor of oxidation: upon membrane damage, entry of extracellular oxidative environment results in disulfide bond formation and homooligomerization at the injury site. This oligomerization acts as a nucleation site for recruitment of TRIM72-containing vesicles to the injury site, leading to membrane patch formation. Probably acts upstream of the Ca(2+)-dependent membrane resealing process. Required for transport of DYSF to sites of cell injury during repair patch formation. Regulates membrane budding and exocytosis. May be involved in the regulation of the mobility of KCNB1-containing endocytic vesicles. This is Tripartite motif-containing protein 72 (trim72) from Xenopus laevis (African clawed frog).